The chain runs to 157 residues: Small ribosomal subunit protein uS7 (157 aa).

This sequence belongs to the universal ribosomal protein uS7 family. As to quaternary structure, part of the 30S ribosomal subunit. Contacts proteins S9 and S11.

Its function is as follows. One of the primary rRNA binding proteins, it binds directly to 16S rRNA where it nucleates assembly of the head domain of the 30S subunit. Is located at the subunit interface close to the decoding center, probably blocks exit of the E-site tRNA. The polypeptide is Small ribosomal subunit protein uS7 (Koribacter versatilis (strain Ellin345)).